Reading from the N-terminus, the 402-residue chain is Putative F-box protein At3g20030 (402 aa).

The F-box domain maps to 1-56; the sequence is MTMMSDLSQDLLEEILSRVPRTSLGAVRSTCKRWNTLFKDRILCKAEETRDQFRFI.

This Arabidopsis thaliana (Mouse-ear cress) protein is Putative F-box protein At3g20030.